Here is a 509-residue protein sequence, read N- to C-terminus: Apurinic-apyrimidinic endonuclease 1 (509 aa).

Residues 1-24 (MPRHCCCFVFHFLLYMLLINIVKN) form the signal peptide. The tract at residues 144 to 188 (EEKDEECDEKTKQDNNKENIKNETIVQKKKIDKNNKTKEKIKTKS) is disordered. Basic and acidic residues-rich tracts occupy residues 152 to 164 (EKTKQDNNKENIK) and 175 to 188 (DKNNKTKEKIKTKS). The Zn(2+) site is built by His-291, His-331, Glu-367, Asp-401, His-404, His-438, Asp-451, His-453, and Glu-483. His-404 contributes to the Mn(2+) binding site. The Mn(2+) site is built by Asp-451 and His-453.

Belongs to the AP endonuclease 2 family. It depends on Zn(2+) as a cofactor. Mn(2+) is required as a cofactor. May be proteolytically cleaved.

It localises to the mitochondrion. In terms of biological role, plays a role in mitochondrial DNA base excision repair (BER) pathway induced by oxidative stress. Has apurinic/apyrimidinic (AP) endonuclease activity towards double-stranded DNA (dsDNA) with a preference for C as opposite base. Has 3'-phosphatase activity; removes 3'-phosphate from blunt-end, recessed, and gapped DNA templates and thus, removes 3'-blocks for DNA polymerase activity during BER. Lacks 3'-5' exonuclease activity and does not cleave damaged bases by nucleotide incision repair (NIR). This is Apurinic-apyrimidinic endonuclease 1 from Plasmodium berghei (strain Anka).